A 479-amino-acid chain; its full sequence is Probable glycine dehydrogenase (decarboxylating) subunit 2 (479 aa).

Position 265 is an N6-(pyridoxal phosphate)lysine (Lys-265).

Belongs to the GcvP family. C-terminal subunit subfamily. The glycine cleavage system is composed of four proteins: P, T, L and H. In this organism, the P 'protein' is a heterodimer of two subunits. Requires pyridoxal 5'-phosphate as cofactor.

The catalysed reaction is N(6)-[(R)-lipoyl]-L-lysyl-[glycine-cleavage complex H protein] + glycine + H(+) = N(6)-[(R)-S(8)-aminomethyldihydrolipoyl]-L-lysyl-[glycine-cleavage complex H protein] + CO2. Its function is as follows. The glycine cleavage system catalyzes the degradation of glycine. The P protein binds the alpha-amino group of glycine through its pyridoxal phosphate cofactor; CO(2) is released and the remaining methylamine moiety is then transferred to the lipoamide cofactor of the H protein. This chain is Probable glycine dehydrogenase (decarboxylating) subunit 2, found in Pseudothermotoga lettingae (strain ATCC BAA-301 / DSM 14385 / NBRC 107922 / TMO) (Thermotoga lettingae).